The sequence spans 385 residues: MSLMSSVRPSLSIGIEEEYQTVDPVTRDLRSHIHAEIVQKGKLLLAERVKPEMHQSVVEIGTGVCQNIQEAKDEIRDIRQQIIRLARQNDLRLAAGGTHPFAQWREQEIYPDDRYRTIVEDLKMVARANLIFGLHVHIGVEDRETAIQLMNSARYFLPHLLALSANSPFWVGMETGLRSYRCKVFDKFPRTNIPDLYQSWSEFENYVNLLIHTNCIDNAKKIWWDIRPHPYFPTLEFRICDMPMRLEETIAIAALCQAIIAKLYRIHEQNLTFRHYSRSLIMENKWRAARYGLDGKMIDFGKQTEVPARQLIEEILEFVSDVVPELGSREEIAYIRRIMEHGNGADRQLRVFHETGDLKKVVDYMIEETEYGLFAPAFTAAGEGQ.

This sequence belongs to the glutamate--cysteine ligase type 2 family. YbdK subfamily.

It carries out the reaction L-cysteine + L-glutamate + ATP = gamma-L-glutamyl-L-cysteine + ADP + phosphate + H(+). ATP-dependent carboxylate-amine ligase which exhibits weak glutamate--cysteine ligase activity. The protein is Putative glutamate--cysteine ligase 2 of Solibacter usitatus (strain Ellin6076).